Reading from the N-terminus, the 807-residue chain is Glycerol-3-phosphate acyltransferase (807 aa).

The HXXXXD motif motif lies at Cys-305 to Met-310.

It belongs to the GPAT/DAPAT family.

It localises to the cell inner membrane. The catalysed reaction is sn-glycerol 3-phosphate + an acyl-CoA = a 1-acyl-sn-glycero-3-phosphate + CoA. Its pathway is phospholipid metabolism; CDP-diacylglycerol biosynthesis; CDP-diacylglycerol from sn-glycerol 3-phosphate: step 1/3. This Vibrio atlanticus (strain LGP32) (Vibrio splendidus (strain Mel32)) protein is Glycerol-3-phosphate acyltransferase.